Reading from the N-terminus, the 3174-residue chain is Probable polyketide synthase 15 (3174 aa).

Residues 23–474 (NDEIAIVGIG…GSNCCLILSQ (452 aa)) enclose the Ketosynthase family 3 (KS3) domain. Catalysis depends on for beta-ketoacyl synthase activity residues C194, H342, and H397. Coiled coils occupy residues 472–509 (LSQFKNNENQQQQQQQQQQQQQQQQQQQQQRGQQQYDN) and 574–604 (EFNKQKQSQKEKEKEKEREGEEKEQLNRVQT). Residues 578–599 (QKQSQKEKEKEKEREGEEKEQL) show a composition bias toward basic and acidic residues. The segment at 578 to 601 (QKQSQKEKEKEKEREGEEKEQLNR) is disordered. The acyl/malonyl transferase stretch occupies residues 707–740 (GIEASFIVGHSLGEIPAAYCSGMITLDTLCYLIY). The active-site For acyl/malonyl transferase activity is S717. The interval 1034-1156 (IDILGLSNYD…ANFQLLNNNN (123 aa)) is N-terminal hotdog fold. The PKS/mFAS DH domain maps to 1034–1332 (IDILGLSNYD…CKSLKIVKNP (299 aa)). H1068 (proton acceptor; for dehydratase activity) is an active-site residue. Positions 1182–1332 (NKTKISRIDL…CKSLKIVKNP (151 aa)) are C-terminal hotdog fold. Catalysis depends on D1241, which acts as the Proton donor; for dehydratase activity. The stretch at 1758–1793 (LEININNNNNNNNNNNNNNNNNNNNNNNNNNYEDNV) forms a coiled coil. The 78-residue stretch at 2653–2730 (VDSLNIKDIF…LVIKIIITAI (78 aa)) folds into the Carrier domain. S2690 carries the O-(pantetheine 4'-phosphoryl)serine modification.

Requires pantetheine 4'-phosphate as cofactor.

Probable polyketide synthase. This Dictyostelium discoideum (Social amoeba) protein is Probable polyketide synthase 15 (pks15).